The primary structure comprises 195 residues: Pyridoxal 5'-phosphate synthase subunit PdxT (195 aa).

Residue 46-48 participates in L-glutamine binding; sequence GES. C78 acts as the Nucleophile in catalysis. Residues R107 and 136–137 each bind L-glutamine; that span reads IR. Residues H173 and E175 each act as charge relay system in the active site.

The protein belongs to the glutaminase PdxT/SNO family. As to quaternary structure, in the presence of PdxS, forms a dodecamer of heterodimers. Only shows activity in the heterodimer.

The catalysed reaction is aldehydo-D-ribose 5-phosphate + D-glyceraldehyde 3-phosphate + L-glutamine = pyridoxal 5'-phosphate + L-glutamate + phosphate + 3 H2O + H(+). The enzyme catalyses L-glutamine + H2O = L-glutamate + NH4(+). It participates in cofactor biosynthesis; pyridoxal 5'-phosphate biosynthesis. Catalyzes the hydrolysis of glutamine to glutamate and ammonia as part of the biosynthesis of pyridoxal 5'-phosphate. The resulting ammonia molecule is channeled to the active site of PdxS. This chain is Pyridoxal 5'-phosphate synthase subunit PdxT, found in Dehalococcoides mccartyi (strain ATCC BAA-2100 / JCM 16839 / KCTC 5957 / BAV1).